The chain runs to 333 residues: Adenosine deaminase (333 aa).

Zn(2+)-binding residues include His-12 and His-14. 3 residues coordinate substrate: His-14, Asp-16, and Gly-170. Residue His-197 coordinates Zn(2+). The Proton donor role is filled by Glu-200. Asp-278 contacts Zn(2+). Residue Asp-279 participates in substrate binding.

It belongs to the metallo-dependent hydrolases superfamily. Adenosine and AMP deaminases family. Adenosine deaminase subfamily. The cofactor is Zn(2+).

The catalysed reaction is adenosine + H2O + H(+) = inosine + NH4(+). It catalyses the reaction 2'-deoxyadenosine + H2O + H(+) = 2'-deoxyinosine + NH4(+). Functionally, catalyzes the hydrolytic deamination of adenosine and 2-deoxyadenosine. This Escherichia coli O45:K1 (strain S88 / ExPEC) protein is Adenosine deaminase.